The following is a 157-amino-acid chain: Transcriptional repressor NrdR (157 aa).

Residues 1 to 24 form a disordered region; sequence MRCPKCGGNKSSVVDSRQAEDGNT. Residues 3 to 34 fold into a zinc finger; sequence CPKCGGNKSSVVDSRQAEDGNTIRRRRECEEC. In terms of domain architecture, ATP-cone spans 49–139; sequence LVVVKKDGTR…VYRSFKDVGE (91 aa).

Belongs to the NrdR family. Zn(2+) is required as a cofactor.

In terms of biological role, negatively regulates transcription of bacterial ribonucleotide reductase nrd genes and operons by binding to NrdR-boxes. This chain is Transcriptional repressor NrdR, found in Streptococcus sanguinis (strain SK36).